Reading from the N-terminus, the 343-residue chain is Putative trace amine-associated receptor 3 (343 aa).

The Extracellular segment spans residues M1–V35. Residues F36–I56 form a helical membrane-spanning segment. Topologically, residues S57–F68 are cytoplasmic. The chain crosses the membrane as a helical span at residues L69–I89. The Extracellular portion of the chain corresponds to M90–Q150. An intrachain disulfide couples C104 to C189. N-linked (GlcNAc...) asparagine glycosylation is present at N145. Residues L151–L168 form a helical membrane-spanning segment. Topologically, residues S169–D172 are cytoplasmic. Positions V173–F186 are extracellular Loop 2 (ECL2). The chain crosses the membrane as a helical span at residues V173–F193. Residues N194–G198 lie on the Extracellular side of the membrane. A helical membrane pass occupies residues T199–V223. Residues S224–T257 lie on the Cytoplasmic side of the membrane. Residues L258–I278 form a helical membrane-spanning segment. Topologically, residues D279–P287 are extracellular. The helical transmembrane segment at I288–I308 threads the bilayer. Residues H309 to H343 lie on the Cytoplasmic side of the membrane.

Belongs to the G-protein coupled receptor 1 family. In terms of tissue distribution, not expressed in the pons, thalamus, globus pallidus, caudate, putamen or cerebellum.

The protein resides in the cell membrane. Functionally, putative olfactory receptor activated by several primary trace amines. In Homo sapiens (Human), this protein is Putative trace amine-associated receptor 3.